A 235-amino-acid chain; its full sequence is MLRGAPGLGLTARKGAEDSAEDLGGPCPEPGGDSGVLGANGASCSRGEAEEPAGRRRARPVRSKARRMAANVRERKRILDYNEAFNALRRALRHDLGGKRLSKIATLRRAIHRIAALSLVLRASPAPRGPCGHLECHGPAARGDTGDTGASPPPPAGPSLARPDAARPSVPSAPRCASCPPHAPLARPSAVAEGPGLAQASGGSWRRCPGASSAGPPPWPRGYLRSAPGMGHPRS.

2 disordered regions span residues 1–69 (MLRG…RRMA) and 132–235 (GHLE…HPRS). A compositionally biased stretch (basic residues) spans 55–67 (RRRARPVRSKARR). The bHLH domain maps to 65–117 (ARRMAANVRERKRILDYNEAFNALRRALRHDLGGKRLSKIATLRRAIHRIAAL).

Heterodimer. Efficient DNA binding requires dimerization with another bHLH protein. Interacts with TCF3, TCF4, and TCF12.

The protein localises to the nucleus. The protein resides in the cytoplasm. Its function is as follows. Transcription factor, which play a role in limb development. Is an essential player in the regulatory network governing transcription of genes implicated in limb morphogenesis. The polypeptide is Class A basic helix-loop-helix protein 9 (BHLHA9) (Homo sapiens (Human)).